Here is a 534-residue protein sequence, read N- to C-terminus: Bifunctional purine biosynthesis protein PurH (534 aa).

The region spanning 1 to 148 (MNTVRPIRRA…KNHQDVTIVV (148 aa)) is the MGS-like domain.

It belongs to the PurH family.

The enzyme catalyses (6R)-10-formyltetrahydrofolate + 5-amino-1-(5-phospho-beta-D-ribosyl)imidazole-4-carboxamide = 5-formamido-1-(5-phospho-D-ribosyl)imidazole-4-carboxamide + (6S)-5,6,7,8-tetrahydrofolate. It carries out the reaction IMP + H2O = 5-formamido-1-(5-phospho-D-ribosyl)imidazole-4-carboxamide. Its pathway is purine metabolism; IMP biosynthesis via de novo pathway; 5-formamido-1-(5-phospho-D-ribosyl)imidazole-4-carboxamide from 5-amino-1-(5-phospho-D-ribosyl)imidazole-4-carboxamide (10-formyl THF route): step 1/1. It participates in purine metabolism; IMP biosynthesis via de novo pathway; IMP from 5-formamido-1-(5-phospho-D-ribosyl)imidazole-4-carboxamide: step 1/1. The polypeptide is Bifunctional purine biosynthesis protein PurH (Shewanella denitrificans (strain OS217 / ATCC BAA-1090 / DSM 15013)).